The chain runs to 274 residues: Diaminopimelate epimerase (274 aa).

Substrate is bound by residues N11, Q44, and N64. C73 (proton donor) is an active-site residue. Residues 74–75, N157, N190, and 208–209 each bind substrate; these read GN and ER. Residue C217 is the Proton acceptor of the active site. 218–219 contributes to the substrate binding site; the sequence is GS.

Belongs to the diaminopimelate epimerase family. Homodimer.

It localises to the cytoplasm. It catalyses the reaction (2S,6S)-2,6-diaminopimelate = meso-2,6-diaminopimelate. Its pathway is amino-acid biosynthesis; L-lysine biosynthesis via DAP pathway; DL-2,6-diaminopimelate from LL-2,6-diaminopimelate: step 1/1. In terms of biological role, catalyzes the stereoinversion of LL-2,6-diaminopimelate (L,L-DAP) to meso-diaminopimelate (meso-DAP), a precursor of L-lysine and an essential component of the bacterial peptidoglycan. The chain is Diaminopimelate epimerase from Haemophilus influenzae (strain PittEE).